A 252-amino-acid polypeptide reads, in one-letter code: Phosphoglycolate phosphatase (252 aa).

Asp-13 (nucleophile) is an active-site residue. Mg(2+) contacts are provided by Asp-13, Asp-15, and Asp-192.

Belongs to the HAD-like hydrolase superfamily. CbbY/CbbZ/Gph/YieH family. As to quaternary structure, monomer. The cofactor is Mg(2+). It depends on chloride as a cofactor.

It carries out the reaction 2-phosphoglycolate + H2O = glycolate + phosphate. The protein operates within organic acid metabolism; glycolate biosynthesis; glycolate from 2-phosphoglycolate: step 1/1. Functionally, specifically catalyzes the dephosphorylation of 2-phosphoglycolate. Is involved in the dissimilation of the intracellular 2-phosphoglycolate formed during the DNA repair of 3'-phosphoglycolate ends, a major class of DNA lesions induced by oxidative stress. This chain is Phosphoglycolate phosphatase, found in Salmonella choleraesuis (strain SC-B67).